The chain runs to 96 residues: UPF0235 protein VC0395_A0010/VC395_0502 (96 aa).

The protein belongs to the UPF0235 family.

The sequence is that of UPF0235 protein VC0395_A0010/VC395_0502 from Vibrio cholerae serotype O1 (strain ATCC 39541 / Classical Ogawa 395 / O395).